Here is a 61-residue protein sequence, read N- to C-terminus: Large ribosomal subunit protein bL28 (61 aa).

Residues 1–26 form a disordered region; sequence MAKDYVTGKRTHFGNTRSHALNHSRR.

Belongs to the bacterial ribosomal protein bL28 family.

This is Large ribosomal subunit protein bL28 from Lactiplantibacillus plantarum (strain ATCC BAA-793 / NCIMB 8826 / WCFS1) (Lactobacillus plantarum).